A 197-amino-acid chain; its full sequence is MNRRTAEVERYTLETQIRVQVDLDGTGKGKFRSGVHFLDHMLDQVARHGCMDLEVEAKGDLHIDAHHTVEDIGIALGQAFAKALGDKRGIHRYGHAYVPLDEALSRVVIDFSGRSGLFYEVEFPRDRIGDFEVDLFVEFFRGFVNHAQATLHIDNLKGLNAHHVAETIFKAFGRAVRAAVERDARTAGVLPSTKGLL.

This sequence belongs to the imidazoleglycerol-phosphate dehydratase family.

The protein localises to the cytoplasm. It carries out the reaction D-erythro-1-(imidazol-4-yl)glycerol 3-phosphate = 3-(imidazol-4-yl)-2-oxopropyl phosphate + H2O. It functions in the pathway amino-acid biosynthesis; L-histidine biosynthesis; L-histidine from 5-phospho-alpha-D-ribose 1-diphosphate: step 6/9. This is Imidazoleglycerol-phosphate dehydratase from Methylococcus capsulatus (strain ATCC 33009 / NCIMB 11132 / Bath).